The primary structure comprises 479 residues: MNRNPDQNTLPNITLKIIETYLGRLPSVNEYHMLKLQTRNIQKITVFNKDIFVSLVKKNKKRFFSDVDTSASEIKDRILSYFSKQTQTYNIGKLFTIIELQSVLVTTYTDILGVLTIKAPNVISSKISYNVTSMEELARDMLNSMNVAVIDKAKVMGRHNVSSLVKNVNKLMEEYLRRHNKSCICYGSYSLYLINPNIRYGDIDILQTNSRTFLIDLAFLIKFITGNNIILSKIPYLRNYMVIKDENDNHIIDSFNIRQDTMNVVPKIFIDNIYIVDPTFQLLNMIKMFSQIDRLEDLSKDPEKFNARMATMLEYVRYTHGIVFDGTRNNMPMKCIIDENTRIVTVTTKDYFSFKKCLVYLDENVLSSDILDLNADTSCDFESVTNSVYLIHDNIMYTYFSNTILLSDKGTVHEISARGLCAHILLYQMLTSGEYKQCLSDLLNSMMNRDKIPIYSHTERDKKPGRHGFINIEKDIIVF.

Active-site residues include Asp-202 and Asp-204. Residues Asp-202, Asp-204, and Asp-253 each contribute to the Ca(2+) site.

Belongs to the poxviridae poly(A) polymerase catalytic subunit family. In terms of assembly, heterodimer of a large (catalytic) subunit and a small (regulatory) subunit.

It carries out the reaction RNA(n) + ATP = RNA(n)-3'-adenine ribonucleotide + diphosphate. Functionally, polymerase that creates the 3'-poly(A) tail of mRNA's. This chain is Poly(A) polymerase catalytic subunit (OPG063), found in Mus musculus (Mouse).